The sequence spans 202 residues: Peptidyl-tRNA hydrolase (202 aa).

Tyrosine 19 contributes to the tRNA binding site. Histidine 24 serves as the catalytic Proton acceptor. Positions 70, 72, and 118 each coordinate tRNA.

Belongs to the PTH family. Monomer.

The protein localises to the cytoplasm. The catalysed reaction is an N-acyl-L-alpha-aminoacyl-tRNA + H2O = an N-acyl-L-amino acid + a tRNA + H(+). Its function is as follows. Hydrolyzes ribosome-free peptidyl-tRNAs (with 1 or more amino acids incorporated), which drop off the ribosome during protein synthesis, or as a result of ribosome stalling. Functionally, catalyzes the release of premature peptidyl moieties from peptidyl-tRNA molecules trapped in stalled 50S ribosomal subunits, and thus maintains levels of free tRNAs and 50S ribosomes. This Prochlorococcus marinus (strain NATL2A) protein is Peptidyl-tRNA hydrolase.